We begin with the raw amino-acid sequence, 312 residues long: Olfactory receptor 2L13 (312 aa).

At 1 to 24 (MEKWNHTSNDFILLGLLPPNQTGI) the chain is on the extracellular side. N-linked (GlcNAc...) asparagine glycans are attached at residues N5 and N20. A helical membrane pass occupies residues 25–48 (FLLCLIILIFFLASVGNSAMIHLI). The Cytoplasmic segment spans residues 49 to 56 (HVDPRLHT). The chain crosses the membrane as a helical span at residues 57 to 78 (PMYFLLSQLSLMDLMYISTTVP). The Extracellular segment spans residues 79 to 99 (KMAYNFLSGQKGISFLGCGVQ). The cysteines at positions 96 and 188 are disulfide-linked. A helical membrane pass occupies residues 100 to 119 (SFFFLTMACSEGLLLTSMAY). The Cytoplasmic segment spans residues 120-138 (DRYLAICHSLYYPIRMSKM). A helical transmembrane segment spans residues 139 to 157 (MCVKMIGGSWTLGSINSLA). Topologically, residues 158–194 (HTVFALHIPYCRSRAIDHFFCDVPAMLLLACTDTWVY) are extracellular. The chain crosses the membrane as a helical span at residues 195–218 (EYMVFVSTSLFLLFPFIGITSSCG). Residues 219-235 (RVLFAVYHMHSKEGRKK) lie on the Cytoplasmic side of the membrane. The chain crosses the membrane as a helical span at residues 236–258 (AFTTISTHLTVVIFYYAPFVYTY). Residues 259-271 (LRPRNLRSPAEDK) lie on the Extracellular side of the membrane. The chain crosses the membrane as a helical span at residues 272 to 291 (ILAVFYTILTPMLNPIIYSL). Topologically, residues 292–312 (RNKEVLGAMRRVFGIFSFLKE) are cytoplasmic.

Belongs to the G-protein coupled receptor 1 family.

Its subcellular location is the cell membrane. Its function is as follows. Odorant receptor. The protein is Olfactory receptor 2L13 (OR2L13) of Homo sapiens (Human).